The chain runs to 801 residues: PR domain zinc finger protein 4 (801 aa).

The region spanning Lys-412–Ser-529 is the SET domain. The C2H2-type 1; atypical zinc finger occupies His-545–His-566. 4 C2H2-type zinc fingers span residues His-618 to His-640, Tyr-646 to His-668, Leu-674 to His-696, and Ile-702 to His-724. The segment at Tyr-730–Cys-752 adopts a C2H2-type 6; atypical zinc-finger fold. The disordered stretch occupies residues Thr-751–Glu-782. The span at Pro-762–Ala-776 shows a compositional bias: acidic residues.

The protein belongs to the class V-like SAM-binding methyltransferase superfamily. In terms of tissue distribution, expressed in many tissues. Highly expressed in ovary, testis, pancreas, brain, heart and prostate.

It localises to the nucleus. In terms of biological role, may function as a transcription factor involved in cell differentiation. In Homo sapiens (Human), this protein is PR domain zinc finger protein 4 (PRDM4).